The primary structure comprises 246 residues: Pyridoxine 5'-phosphate synthase (246 aa).

N12 provides a ligand contact to 3-amino-2-oxopropyl phosphate. 14 to 15 (DH) is a 1-deoxy-D-xylulose 5-phosphate binding site. R23 serves as a coordination point for 3-amino-2-oxopropyl phosphate. The active-site Proton acceptor is the H48. Residues R50 and H55 each coordinate 1-deoxy-D-xylulose 5-phosphate. The active-site Proton acceptor is E75. T105 contributes to the 1-deoxy-D-xylulose 5-phosphate binding site. H196 acts as the Proton donor in catalysis. Residues G197 and 218-219 (GH) contribute to the 3-amino-2-oxopropyl phosphate site.

This sequence belongs to the PNP synthase family. As to quaternary structure, homooctamer; tetramer of dimers.

It localises to the cytoplasm. It catalyses the reaction 3-amino-2-oxopropyl phosphate + 1-deoxy-D-xylulose 5-phosphate = pyridoxine 5'-phosphate + phosphate + 2 H2O + H(+). Its pathway is cofactor biosynthesis; pyridoxine 5'-phosphate biosynthesis; pyridoxine 5'-phosphate from D-erythrose 4-phosphate: step 5/5. Catalyzes the complicated ring closure reaction between the two acyclic compounds 1-deoxy-D-xylulose-5-phosphate (DXP) and 3-amino-2-oxopropyl phosphate (1-amino-acetone-3-phosphate or AAP) to form pyridoxine 5'-phosphate (PNP) and inorganic phosphate. This chain is Pyridoxine 5'-phosphate synthase, found in Nitrosococcus oceani (strain ATCC 19707 / BCRC 17464 / JCM 30415 / NCIMB 11848 / C-107).